The chain runs to 205 residues: Small ribosomal subunit protein uS4 (205 aa).

A disordered region spans residues 19 to 45 (IWGRPKSPVNRREYGPGQHGQRRKGKL). Positions 94–157 (SRLDAVVYRA…KQLAIVLEAV (64 aa)) constitute an S4 RNA-binding domain.

It belongs to the universal ribosomal protein uS4 family. As to quaternary structure, part of the 30S ribosomal subunit. Contacts protein S5. The interaction surface between S4 and S5 is involved in control of translational fidelity.

Functionally, one of the primary rRNA binding proteins, it binds directly to 16S rRNA where it nucleates assembly of the body of the 30S subunit. Its function is as follows. With S5 and S12 plays an important role in translational accuracy. The chain is Small ribosomal subunit protein uS4 from Brucella melitensis biotype 2 (strain ATCC 23457).